The primary structure comprises 100 residues: NADH-quinone oxidoreductase subunit K (100 aa).

3 helical membrane-spanning segments follow: residues 2–22, 29–49, and 63–83; these read ITLS…LIGI, IMLF…LAAI, and LFIV…LILW.

Belongs to the complex I subunit 4L family. In terms of assembly, NDH-1 is composed of 14 different subunits. Subunits NuoA, H, J, K, L, M, N constitute the membrane sector of the complex.

Its subcellular location is the cell inner membrane. It catalyses the reaction a quinone + NADH + 5 H(+)(in) = a quinol + NAD(+) + 4 H(+)(out). In terms of biological role, NDH-1 shuttles electrons from NADH, via FMN and iron-sulfur (Fe-S) centers, to quinones in the respiratory chain. The immediate electron acceptor for the enzyme in this species is believed to be ubiquinone. Couples the redox reaction to proton translocation (for every two electrons transferred, four hydrogen ions are translocated across the cytoplasmic membrane), and thus conserves the redox energy in a proton gradient. The polypeptide is NADH-quinone oxidoreductase subunit K (Campylobacter curvus (strain 525.92)).